A 334-amino-acid polypeptide reads, in one-letter code: Glutaminase (334 aa).

Positions 76, 126, 170, 177, 201, 253, and 271 each coordinate substrate.

It belongs to the glutaminase family. As to quaternary structure, homotetramer.

It carries out the reaction L-glutamine + H2O = L-glutamate + NH4(+). The chain is Glutaminase from Trichormus variabilis (strain ATCC 29413 / PCC 7937) (Anabaena variabilis).